Here is a 298-residue protein sequence, read N- to C-terminus: MTDLHTDVERYLRYLSVERQLSPITLLNYQRQLEAIIHFASENGLQSWQQCDVTMVRNFAVRSRRKGLGAAGLALRLSALRSFFDWLVSQNELKANPAKGVSAPKAPRHLPKNIDVDDMSRLLDIDINDPLAVRDRAMLEVMYGAGLRLSELVGLDIKHLDLESGEVWVMGKGSKERRLPIGRNAVAWIEHWLDLRDLFGSEDDALFLSKLGKRISARNVQKRFAEWGIKQGLNNHVHPHKLRHSFATHMLESSGDLRGVQELLGHANLSTTQIYTHLDFQHLASVYDAAHPRAKRGK.

The 87-residue stretch at 2–88 (TDLHTDVERY…ALRSFFDWLV (87 aa)) folds into the Core-binding (CB) domain. One can recognise a Tyr recombinase domain in the interval 109–288 (HLPKNIDVDD…DFQHLASVYD (180 aa)). Residues R148, K172, H240, R243, and H266 contribute to the active site. Catalysis depends on Y275, which acts as the O-(3'-phospho-DNA)-tyrosine intermediate.

The protein belongs to the 'phage' integrase family. XerC subfamily. In terms of assembly, forms a cyclic heterotetrameric complex composed of two molecules of XerC and two molecules of XerD, in which XerC interacts with XerD via its C-terminal region, XerD interacts with XerC via its C-terminal region and so on.

The protein localises to the cytoplasm. FtsK may regulate the catalytic switch between XerC and XerD in the heterotetrameric complex during the two steps of the recombination process. Its function is as follows. Site-specific tyrosine recombinase, which acts by catalyzing the cutting and rejoining of the recombining DNA molecules. Binds cooperatively to specific DNA consensus sequences that are separated from XerD binding sites by a short central region, forming the heterotetrameric XerC-XerD complex that recombines DNA substrates. The complex is essential to convert dimers of the bacterial chromosome into monomers to permit their segregation at cell division. It also contributes to the segregational stability of plasmids. In the complex XerC specifically exchanges the top DNA strands. The chain is Tyrosine recombinase XerC from Escherichia coli O6:K15:H31 (strain 536 / UPEC).